Reading from the N-terminus, the 1138-residue chain is Solute carrier family 12 member 5 (1138 aa).

2 disordered regions span residues 1–62 and 96–116; these read MSRR…KGRE and QGSR…KPVQ. Residues 1–98 are Cytoplasmic-facing; the sequence is MSRRFTVTSL…ANYTNLPQGS (98 aa). Over residues 21-45 the composition is skewed to basic and acidic residues; the sequence is PESRRHSVADPRRLPREDVKGDGNP. Positions 46-55 are enriched in polar residues; sequence KESSPFINST. At Thr57 the chain carries Phosphothreonine. Basic and acidic residues predominate over residues 98-111; that stretch reads SREHEEAENNEGGK. Residues 99–120 traverse the membrane as a discontinuously helical segment; it reads REHEEAENNEGGKKKPVQAPRM. Position 113 (Lys113) interacts with K(+). Topologically, residues 121 to 129 are extracellular; sequence GTFMGVYLP. Residues 130–151 traverse the membrane as a helical segment; the sequence is CLQNIFGVILFLRLTWVVGIAG. Topologically, residues 152 to 174 are cytoplasmic; that stretch reads IMESFCMVFICCSCTMLTAISMS. The chain crosses the membrane as a helical span at residues 175–203; it reads AIATNGVVPAGGSYYMISRSLGPEFGGAV. A chloride-binding site is contributed by Ala184. Over 204–229 the chain is Extracellular; the sequence is GLCFYLGTTFAGAMYILGTIEILLAY. The next 2 helical transmembrane spans lie at 230–250 and 251–276; these read LFPA…AAML and NNMR…KYVN. Residues 277-402 are Extracellular-facing; the sequence is KFALVFLGCV…ERRGMPSVGL (126 aa). Residues Cys310 and Cys325 are joined by a disulfide bond. Asn314, Asn333, Asn351, and Asn362 each carry an N-linked (GlcNAc...) asparagine glycan. Cys345 and Cys354 are joined by a disulfide. The chain crosses the membrane as a helical span at residues 403–420; sequence ADGTPVDMDHPYVFSDMT. K(+) is bound at residue Met410. Tyr414 and Val415 together coordinate chloride. The Cytoplasmic portion of the chain corresponds to 421 to 429; that stretch reads SYFTLLVGI. The helical transmembrane segment at 430 to 453 threads the bilayer; it reads YFPSVTGIMAGSNRSGDLRDAQKS. Asp446 contacts K(+). At 454–485 the chain is on the extracellular side; that stretch reads IPTGTILAIATTSAVYISSVVLFGACIEGVVL. The helical transmembrane segment at 486-513 threads the bilayer; sequence RDKFGEAVNGNLVVGTLAWPSPWVIVIG. At 514 to 534 the chain is on the cytoplasmic side; it reads SFFSTCGAGLQSLTGAPRLLQ. Transmembrane regions (helical) follow at residues 535-555 and 556-578; these read AISR…KANG and EPTW…ASLD. Position 569 (Glu569) interacts with chloride. Topologically, residues 579-592 are cytoplasmic; that stretch reads EVAPILSMFFLMCY. Helical transmembrane passes span 593-615 and 616-632; these read MFVN…PRFR and YYHW…CLAL. The Cytoplasmic segment spans residues 633-1138; the sequence is MFICSWYYAL…GGREVITIYS (506 aa). The interval 667-681 is scissor helix; sequence GIRGLSLSAARYALL. Thr929 is subject to Phosphothreonine; by OXSR1 and STK39. The segment at 943-1051 is disordered; it reads HLTKNERERE…GPSPVSSEGI (109 aa). The span at 945-962 shows a compositional bias: basic and acidic residues; it reads TKNEREREIQSITDESRG. Acidic residues predominate over residues 982-994; it reads TACDNEEKPEEEV. Positions 1001–1012 are enriched in low complexity; the sequence is SAPSCPSSSPSP. Over residues 1019-1041 the composition is skewed to basic and acidic residues; that stretch reads ERETDPEVHLTWTKDKSVAEKNK. The residue at position 1029 (Thr1029) is a Phosphothreonine; by OXSR1 and STK39. 3 positions are modified to phosphoserine: Ser1044, Ser1047, and Ser1048.

The protein belongs to the SLC12A transporter family. K/Cl co-transporter subfamily. As to quaternary structure, homodimer; adopts a domain-swap conformation at the scissor helices connecting the transmembrane domain and C-terminal domain. Heterodimer with K-Cl cotransporters SLC12A6 and SLC12A7. Interacts with AP2A1. Post-translationally, phosphorylated at Thr-929 and Thr-1029 by OXSR1/OSR1 and STK39/SPAK downstream of WNK kinases (WNK1, WNK2, WNK3 or WNK4), inhibiting the potassium-chloride cotransport activity. In terms of tissue distribution, expressed in brainstem, spinal cord and olfactory bulb of 17 dpc embryos. Expressed in all parts of the brain and spinal cord in postnatal day 14 mice. Expressed in brainstem and spinal cord of 17 dpc embryos. Expressed in all parts of the brain and spinal cord in postnatal day 14 mice.

Its subcellular location is the cell membrane. It localises to the cell projection. The protein localises to the dendrite. The catalysed reaction is K(+)(in) + chloride(in) = K(+)(out) + chloride(out). With respect to regulation, inhibited following phosphorylation by OXSR1/OSR1 and STK39/SPAK: phosphorylation takes place downstream of WNK kinases (WNK1, WNK2, WNK3 or WNK4) in response to hyperosmotic stress and subsequent cell shrinkage. Functionally, mediates electroneutral potassium-chloride cotransport in mature neurons and is required for neuronal Cl(-) homeostasis. As major extruder of intracellular chloride, it establishes the low neuronal Cl(-) levels required for chloride influx after binding of GABA-A and glycine to their receptors, with subsequent hyperpolarization and neuronal inhibition. Involved in the regulation of dendritic spine formation and maturation. The sequence is that of Solute carrier family 12 member 5 (Slc12a5) from Mus musculus (Mouse).